A 218-amino-acid polypeptide reads, in one-letter code: Flagellar calcium-binding protein TB-24 (218 aa).

The segment at 1–27 is disordered; sequence MGCSASKDTTNSKDGAASKGGKDGKTT. 4 consecutive EF-hand domains span residues 48–83, 84–119, 130–165, and 167–202; these read ESKS…ILKL, DEFT…LVEF, YDIF…LKEW, and VDIT…KKLQ. The Ca(2+) site is built by Asp-61, Asn-63, Thr-65, Lys-67, and Glu-72. Ca(2+) contacts are provided by Asp-143, Asp-145, Ser-147, Glu-154, Asp-180, Asn-182, Ser-184, and Glu-191.

Belongs to the calflagin family.

Its subcellular location is the cell projection. It localises to the cilium. It is found in the flagellum. Its function is as follows. May contribute to the rapid motility of the trypanosomes, playing a role either in flagellar structure or in calcium metabolism. Could alternate between a GDP-bound inactive form to a calcium/GTP-bound active form. This is Flagellar calcium-binding protein TB-24 from Trypanosoma brucei brucei.